Reading from the N-terminus, the 419-residue chain is MPGRGRCPDCGSTELVEDSHYSQSQLVCSDCGCVVTEGVLTTTFSDEGNLREVTYSRSTGENEQVSRSQQRGLRRVRDLCRVLQLPPTFEDTAVAYYQQAYRHSGIRAARLQKKEVLVGCCVLITCRQHNWPLTMGAICTLLYADLDVFSSTYMQIVKLLGLDVPSLCLAELVKTYCSSFKLFQASPSVPAKYVEDKEKMLSRTMQLVELANETWLVTGRHPLPVITAATFLAWQSLQPADRLSCSLARFCKLANVDLPYPASSRLQELLAVLLRMAEQLAWLRVLRLDKRSVVKHIGDLLQHRQSLVRSAFRDGTAEVETREKEPPGWGQGQGEGEVGNNSLGLPQGKRPASPALLLPPCMLKSPKRICPVPPVSTVTGDENISDSEIEQYLRTPQEVRDFQRAQAARQAATSVPNPP.

The segment at 2 to 36 adopts a TFIIB-type zinc-finger fold; that stretch reads PGRGRCPDCGSTELVEDSHYSQSQLVCSDCGCVVT. 4 residues coordinate Zn(2+): Cys7, Cys10, Cys28, and Cys31. A run of 2 repeats spans residues 72 to 157 and 173 to 249. Residues 108–114 form an interaction with target DNA region; sequence AARLQKK. The segment covering 314-326 has biased composition (basic and acidic residues); that stretch reads DGTAEVETREKEP. Positions 314–351 are disordered; the sequence is DGTAEVETREKEPPGWGQGQGEGEVGNNSLGLPQGKRP. Ser353 carries the phosphoserine modification. A required for the formation of a ternary complex with DNA and TBP; not required for interaction with TBP in the absence of DNA region spans residues 357-363; it reads LLPPCML. Cysteine sulfenic acid (-SOH) is present on Cys361. Positions 365-419 are required for interaction with TBP and formation of a ternary complex with DNA and TBP; sequence SPKRICPVPPVSTVTGDENISDSEIEQYLRTPQEVRDFQRAQAARQAATSVPNPP.

The protein belongs to the TFIIB family. In terms of assembly, component of TFIIIB complexes. The TFIIIB complex has two activities, alpha and beta. The TFIIIB-alpha activity complex is composed of TBP, BDP1, and a complex containing both BRF2 and at least four stably associated proteins; this complex inhibits the transcription by pol III via its phosphorylation by CK2; YY1 facilitates the TFIIIB-alpha complex formation. Interacts with TBP; this interaction promotes recruitment of BRF2 to TATA box-containing promoters. Interacts with TBP and the BURE sequence (GC-rich sequence downstream from the TATA box) to form a strong ternary complex which is joined by BDP1; this ternary complex stimulates pol III transcription. Forms a trimeric complex composed of TBP, BRF2 and mini-SNAPc complex (SNAP43, SNAP50, and the N-terminal third of SNAP190) on the promoter. Assembly of the TBP-BRF2 complex is stimulated by SNAP190. Interacts with MAF1 and SNAPC4. Post-translationally, in response to oxidative stress, Cys-361 is reversibly oxidized to cysteine sulfenic acid. Oxidation of Cys-361 impairs formation of a ternary complex with TBP and DNA and down-regulates expression of target genes in response to oxidative stress.

The protein resides in the nucleus. In terms of biological role, general activator of RNA polymerase III transcription. Factor exclusively required for RNA polymerase III transcription of genes with promoter elements upstream of the initiation sites. Contributes to the regulation of gene expression; functions as activator in the absence of oxidative stress. Down-regulates expression of target genes in response to oxidative stress. Overexpression protects cells against apoptosis in response to oxidative stress. In Homo sapiens (Human), this protein is Transcription factor IIIB 50 kDa subunit (BRF2).